The primary structure comprises 315 residues: D-erythronate dehydrogenase (315 aa).

NAD(+) is bound by residues serine 119, tyrosine 143, and lysine 147. The active-site Proton acceptor is tyrosine 143.

The protein belongs to the NAD(P)-dependent epimerase/dehydratase family.

The enzyme catalyses D-erythronate + NAD(+) = 2-dehydro-D-erythronate + NADH + H(+). Its function is as follows. Catalyzes oxidation of D-erythronate to 2-oxo-tetronate. Can use either NAD(+) or NADP(+) as cosubstrate, with a preference for NAD(+). In Haemophilus influenzae (strain ATCC 51907 / DSM 11121 / KW20 / Rd), this protein is D-erythronate dehydrogenase.